Here is a 175-residue protein sequence, read N- to C-terminus: Ribosome maturation factor RimM (175 aa).

The PRC barrel domain occupies 95 to 175; the sequence is SEDEFYWREL…RIEVDWDPGF (81 aa).

It belongs to the RimM family. Binds ribosomal protein uS19.

The protein resides in the cytoplasm. Functionally, an accessory protein needed during the final step in the assembly of 30S ribosomal subunit, possibly for assembly of the head region. Essential for efficient processing of 16S rRNA. May be needed both before and after RbfA during the maturation of 16S rRNA. It has affinity for free ribosomal 30S subunits but not for 70S ribosomes. The chain is Ribosome maturation factor RimM from Aliivibrio salmonicida (strain LFI1238) (Vibrio salmonicida (strain LFI1238)).